The chain runs to 396 residues: Agropine synthesis cyclase (396 aa).

This sequence belongs to the peptidase M24B family.

The protein is Agropine synthesis cyclase (ags) of Rhizobium rhizogenes (Agrobacterium rhizogenes).